A 327-amino-acid polypeptide reads, in one-letter code: Phenylalanine--tRNA ligase alpha subunit (327 aa).

Glu-252 serves as a coordination point for Mg(2+).

This sequence belongs to the class-II aminoacyl-tRNA synthetase family. Phe-tRNA synthetase alpha subunit type 1 subfamily. As to quaternary structure, tetramer of two alpha and two beta subunits. The cofactor is Mg(2+).

The protein resides in the cytoplasm. It carries out the reaction tRNA(Phe) + L-phenylalanine + ATP = L-phenylalanyl-tRNA(Phe) + AMP + diphosphate + H(+). This Vibrio cholerae serotype O1 (strain ATCC 39541 / Classical Ogawa 395 / O395) protein is Phenylalanine--tRNA ligase alpha subunit.